The following is a 389-amino-acid chain: Chaperone protein DnaJ (389 aa).

Residues 6 to 70 (DYYEVLGLAK…QKKAAYDQYG (65 aa)) form the J domain. The CR-type zinc-finger motif lies at 142–224 (GVEKEIKYNR…CHGTGHEKKA (83 aa)). Zn(2+) is bound by residues Cys155, Cys158, Cys172, Cys175, Cys198, Cys201, Cys212, and Cys215. 4 CXXCXGXG motif repeats span residues 155–162 (CATCGGNG), 172–179 (CHKCHGSG), 198–205 (CDVCHGTG), and 212–219 (CPTCHGTG).

Belongs to the DnaJ family. In terms of assembly, homodimer. Zn(2+) is required as a cofactor.

It is found in the cytoplasm. Its function is as follows. Participates actively in the response to hyperosmotic and heat shock by preventing the aggregation of stress-denatured proteins and by disaggregating proteins, also in an autonomous, DnaK-independent fashion. Unfolded proteins bind initially to DnaJ; upon interaction with the DnaJ-bound protein, DnaK hydrolyzes its bound ATP, resulting in the formation of a stable complex. GrpE releases ADP from DnaK; ATP binding to DnaK triggers the release of the substrate protein, thus completing the reaction cycle. Several rounds of ATP-dependent interactions between DnaJ, DnaK and GrpE are required for fully efficient folding. Also involved, together with DnaK and GrpE, in the DNA replication of plasmids through activation of initiation proteins. In Enterococcus faecalis (strain ATCC 700802 / V583), this protein is Chaperone protein DnaJ.